We begin with the raw amino-acid sequence, 1336 residues long: Misshapen-like kinase 1 (1336 aa).

Residues 25 to 289 (FELVEVVGNG…TEQLLKFPFI (265 aa)) enclose the Protein kinase domain. ATP contacts are provided by residues 31 to 39 (VGNGTYGQV) and K54. D153 (proton acceptor) is an active-site residue. 3 disordered regions span residues 299–347 (RIQL…NVPG), 363–383 (KSNS…QRDP), and 395–890 (QRRI…GGTM). Residues 317–333 (EETEYEYSGSEEEDDSH) show a composition bias toward acidic residues. A phosphoserine mark is found at S324 and S326. Residues 371-380 (QQQQLQQQQQ) show a composition bias toward low complexity. Over residues 396–466 (RRIEEQKEER…EEQRQSERLQ (71 aa)) the composition is skewed to basic and acidic residues. The span at 479-496 (QKQQQQQQQQQQQQQQQQ) shows a compositional bias: low complexity. R502 and R510 each carry omega-N-methylarginine. The span at 519-529 (AWAREVEERAR) shows a compositional bias: basic and acidic residues. Positions 531–544 (NKQQNSPLAKTKPS) are enriched in polar residues. Residues 548–562 (PEPPIPQASPSPPGP) are compositionally biased toward pro residues. Polar residues predominate over residues 599–609 (RSQSLQDQPTR). The span at 622-632 (PAAVPTPTATP) shows a compositional bias: low complexity. Position 643 is a phosphoserine (S643). The span at 672 to 684 (QRTSSIATALNTS) shows a compositional bias: polar residues. Phosphoserine is present on S703. The segment covering 718–731 (PKPPGPPAQPPGPP) has biased composition (pro residues). The span at 738 to 750 (DLRRSDPGWERSD) shows a compositional bias: basic and acidic residues. Phosphoserine occurs at positions 756, 765, 781, 782, and 786. Basic and acidic residues predominate over residues 808 to 825 (LLKERTLDEAPKPPKKAM). Acidic residues predominate over residues 832–848 (EEVESSEDEEEEGDGEP). Residues 870-1336 (MVVHDVEEVS…TLNRNCIMNW (467 aa)) are mediates interaction with RAP2A. T895 is modified (phosphothreonine). The interval 909-946 (GYTNLPDVVQPSHSPTENSQGQSPPTKDGGGDYQSRGL) is disordered. Residues 919–933 (PSHSPTENSQGQSPP) show a composition bias toward polar residues. Residues 1023–1310 (NSEILCAALW…KFLCERNDKV (288 aa)) form the CNH domain.

Belongs to the protein kinase superfamily. STE Ser/Thr protein kinase family. STE20 subfamily. Interacts with RAP2A and NCK1. Interacts with TANC1. Requires Mg(2+) as cofactor. Post-translationally, autophosphorylated.

The protein resides in the cytoplasm. It is found in the postsynaptic density. Its subcellular location is the cell projection. It localises to the axon. The protein localises to the dendrite. It carries out the reaction L-seryl-[protein] + ATP = O-phospho-L-seryl-[protein] + ADP + H(+). It catalyses the reaction L-threonyl-[protein] + ATP = O-phospho-L-threonyl-[protein] + ADP + H(+). Functionally, serine/threonine kinase which acts as a negative regulator of Ras-related Rap2-mediated signal transduction to control neuronal structure and AMPA receptor trafficking. Required for normal synaptic density, dendrite complexity, as well as surface AMPA receptor expression in hippocampal neurons. Can activate the JNK and MAPK14/p38 pathways and mediates stimulation of the stress-activated protein kinase MAPK14/p38 MAPK downstream of the Raf/ERK pathway. Phosphorylates TANC1 upon stimulation by RAP2A, MBP and SMAD1. Has an essential function in negative selection of thymocytes, perhaps by coupling NCK1 to activation of JNK1. Activator of the Hippo signaling pathway which plays a pivotal role in organ size control and tumor suppression by restricting proliferation and promoting apoptosis. MAP4Ks act in parallel to and are partially redundant with STK3/MST2 and STK4/MST2 in the phosphorylation and activation of LATS1/2, and establish MAP4Ks as components of the expanded Hippo pathway. The protein is Misshapen-like kinase 1 (Mink1) of Rattus norvegicus (Rat).